Reading from the N-terminus, the 865-residue chain is cGMP-specific 3',5'-cyclic phosphodiesterase (865 aa).

Position 92 is a phosphoserine (Ser-92). GAF domains are found at residues 154-304 and 336-493; these read DVTA…GIVL and SLEV…GLGI. The PDEase domain maps to 526–850; the sequence is ETRELQSLAA…QKWQALAEQQ (325 aa). His-603 (proton donor) is an active-site residue. Zn(2+)-binding residues include His-607, His-643, Asp-644, and Asp-754. Residue Asp-644 coordinates Mg(2+). Gln-807 contacts 3',5'-cyclic GMP.

The protein belongs to the cyclic nucleotide phosphodiesterase family. Zn(2+) serves as cofactor. Mg(2+) is required as a cofactor. Phosphorylation is regulated by binding of cGMP to the two allosteric sites. Phosphorylation by PRKG1 leads to its activation.

The enzyme catalyses 3',5'-cyclic GMP + H2O = GMP + H(+). It functions in the pathway purine metabolism; 3',5'-cyclic GMP degradation; GMP from 3',5'-cyclic GMP: step 1/1. Most potently inhibited by zaprinast and dipyridamole. Functionally, plays a role in signal transduction by regulating the intracellular concentration of cyclic nucleotides. This phosphodiesterase catalyzes the specific hydrolysis of cGMP to 5'-GMP. Specifically regulates nitric-oxide-generated cGMP. This is cGMP-specific 3',5'-cyclic phosphodiesterase (PDE5A) from Bos taurus (Bovine).